The chain runs to 390 residues: Trehalose-phosphate phosphatase (390 aa).

Asp150 serves as the catalytic Nucleophile. Asp150, Asp152, and Asp333 together coordinate Mg(2+). A substrate-binding site is contributed by 150–152 (DFD).

Belongs to the trehalose phosphatase family. The cofactor is Mg(2+).

The catalysed reaction is alpha,alpha-trehalose 6-phosphate + H2O = alpha,alpha-trehalose + phosphate. The protein operates within glycan biosynthesis; trehalose biosynthesis. Functionally, removes the phosphate from trehalose 6-phosphate to produce free trehalose. This Mycobacterium ulcerans (strain Agy99) protein is Trehalose-phosphate phosphatase (otsB).